A 281-amino-acid polypeptide reads, in one-letter code: Small ribosomal subunit biogenesis GTPase RsgA (281 aa).

The region spanning 59-212 is the CP-type G domain; the sequence is QNEFIRPKVA…LIDTPGFSSL (154 aa). Residues 108–111 and 155–163 contribute to the GTP site; these read TKAD and GQSGVGKTT. Zn(2+)-binding residues include Cys-235, Cys-240, His-242, and Cys-250.

It belongs to the TRAFAC class YlqF/YawG GTPase family. RsgA subfamily. As to quaternary structure, monomer. Associates with 30S ribosomal subunit, binds 16S rRNA. The cofactor is Zn(2+).

It localises to the cytoplasm. Functionally, one of several proteins that assist in the late maturation steps of the functional core of the 30S ribosomal subunit. Helps release RbfA from mature subunits. May play a role in the assembly of ribosomal proteins into the subunit. Circularly permuted GTPase that catalyzes slow GTP hydrolysis, GTPase activity is stimulated by the 30S ribosomal subunit. This Mycoplasmopsis agalactiae (strain NCTC 10123 / CIP 59.7 / PG2) (Mycoplasma agalactiae) protein is Small ribosomal subunit biogenesis GTPase RsgA.